The primary structure comprises 127 residues: MEIFVGTDIMEVERIKKILEKRPHFLERIFTEKEREFLRKKKNPWPHLAGFFSAKESVSKVLGTGIRGFSWQDIEIIHNEYGKPEVVLKGKAKAIAAEKGIKEIKLSISHTSDYAMSVAIAVGGENS.

Mg(2+) is bound by residues Asp8 and Glu56.

This sequence belongs to the P-Pant transferase superfamily. AcpS family. Mg(2+) serves as cofactor.

Its subcellular location is the cytoplasm. The catalysed reaction is apo-[ACP] + CoA = holo-[ACP] + adenosine 3',5'-bisphosphate + H(+). Its function is as follows. Transfers the 4'-phosphopantetheine moiety from coenzyme A to a Ser of acyl-carrier-protein. This is Holo-[acyl-carrier-protein] synthase from Caldanaerobacter subterraneus subsp. tengcongensis (strain DSM 15242 / JCM 11007 / NBRC 100824 / MB4) (Thermoanaerobacter tengcongensis).